A 306-amino-acid chain; its full sequence is MPKSEIRKLLQEIKKQVDNPGNSSTTEIKKMASEAGIDEKTAEEIYHLLTEFYQAVEEHGGIEKYMHSNISWLKIELELLSACYQIAILEDMKVLDISEMLSLNDLRIFPKTPSQLQNTYYKLKKELIQVEDIPKNKPGRKRKTQKNTKKEKTNIFGKVVPAEFKAPTSIKEQISYDKSREKNLVDLLSGVKSNVQLLSENQGEENNVYDLLKSIYSLSSLAVQKEELDKKYQDLQTKCQELEQENSYLKQQNETMTDSFHTLVLQVADFAYASDLDQIQALPLFSQQLVVTLNQLGVFKENYKQM.

It is found in the cytoplasm. In terms of biological role, transcriptional repressor of flagellar motility genes, such as flaA, during extracellular growth at 37 degrees Celsius and during intracellular infection. Binds directly to gene promoter region and probably prevents RNA polymerase binding. At low temperatures, MogR repression activity is modulated by the DegU response regulator in an unknown mechanism. Required for full virulence. This is Motility gene repressor MogR (mogR) from Listeria monocytogenes serotype 4b (strain F2365).